The sequence spans 203 residues: Small ribosomal subunit protein uS4 (203 aa).

Residues 92-164 (TRLDSVVYLL…LEENRIRNVP (73 aa)) enclose the S4 RNA-binding domain.

The protein belongs to the universal ribosomal protein uS4 family. Part of the 30S ribosomal subunit. Contacts protein S5. The interaction surface between S4 and S5 is involved in control of translational fidelity.

Functionally, one of the primary rRNA binding proteins, it binds directly to 16S rRNA where it nucleates assembly of the body of the 30S subunit. With S5 and S12 plays an important role in translational accuracy. This Opitutus terrae (strain DSM 11246 / JCM 15787 / PB90-1) protein is Small ribosomal subunit protein uS4.